The following is a 400-amino-acid chain: Succinate--glutarate CoA-transferase (400 aa).

Asp181 acts as the Nucleophile in catalysis.

This sequence belongs to the CoA-transferase III family.

The enzyme catalyses glutarate + succinyl-CoA = glutaryl-CoA + succinate. Its pathway is amino-acid degradation. It participates in cofactor biosynthesis; biotin biosynthesis. Is involved in L-lysine degradation and provides glutaryl-CoA for biotin synthesis. Catalyzes the conversion of glutarate to glutaryl-CoA via the transfer of CoA from succinyl-CoA. The polypeptide is Succinate--glutarate CoA-transferase (Agrobacterium fabrum (strain C58 / ATCC 33970) (Agrobacterium tumefaciens (strain C58))).